The chain runs to 443 residues: Xaa-Pro dipeptidase (443 aa).

Mn(2+)-binding residues include Asp-246, Asp-257, His-339, Glu-384, and Glu-423.

This sequence belongs to the peptidase M24B family. Bacterial-type prolidase subfamily. The cofactor is Mn(2+).

It catalyses the reaction Xaa-L-Pro dipeptide + H2O = an L-alpha-amino acid + L-proline. Functionally, splits dipeptides with a prolyl residue in the C-terminal position. The protein is Xaa-Pro dipeptidase of Escherichia coli O81 (strain ED1a).